Here is a 457-residue protein sequence, read N- to C-terminus: ATP-dependent protease ATPase subunit HslU (457 aa).

ATP contacts are provided by residues Ile-18 and 60–65 (GVGKTE). Residues 142 to 171 (KQPGMGFFNPAAPEEQEEQPSADQSSTREK) are disordered. Asp-269, Glu-335, and Arg-407 together coordinate ATP.

This sequence belongs to the ClpX chaperone family. HslU subfamily. As to quaternary structure, a double ring-shaped homohexamer of HslV is capped on each side by a ring-shaped HslU homohexamer. The assembly of the HslU/HslV complex is dependent on binding of ATP.

The protein localises to the cytoplasm. Functionally, ATPase subunit of a proteasome-like degradation complex; this subunit has chaperone activity. The binding of ATP and its subsequent hydrolysis by HslU are essential for unfolding of protein substrates subsequently hydrolyzed by HslV. HslU recognizes the N-terminal part of its protein substrates and unfolds these before they are guided to HslV for hydrolysis. The sequence is that of ATP-dependent protease ATPase subunit HslU from Maridesulfovibrio salexigens (strain ATCC 14822 / DSM 2638 / NCIMB 8403 / VKM B-1763) (Desulfovibrio salexigens).